Here is a 221-residue protein sequence, read N- to C-terminus: GTP cyclohydrolase III (221 aa).

Belongs to the archaeal-type GTP cyclohydrolase family.

The enzyme catalyses GTP + 3 H2O = 2-amino-5-formylamino-6-(5-phospho-D-ribosylamino)pyrimidin-4(3H)-one + 2 phosphate + 2 H(+). Functionally, catalyzes the formation of 2-amino-5-formylamino-6-ribofuranosylamino-4(3H)-pyrimidinone ribonucleotide monophosphate and inorganic phosphate from GTP. Also has an independent pyrophosphate phosphohydrolase activity. The chain is GTP cyclohydrolase III from Pyrobaculum calidifontis (strain DSM 21063 / JCM 11548 / VA1).